Here is a 367-residue protein sequence, read N- to C-terminus: Methionine aminopeptidase 1 (367 aa).

Residues 3 to 57 (GILCASPGCGKPAKLQCPTCVNLKLETPSHFCSQECFKTFWPLHKMYHQKGQPEN) form a C6H2-type zinc finger. Zn(2+) is bound by residues Cys6, Cys11, Cys19, Cys22, Cys34, Cys38, His46, and His50. A protein is bound at residue His185. Positions 202, 213, and 276 each coordinate Zn(2+). A protein is bound at residue His283. Positions 309 and 340 each coordinate Zn(2+).

It belongs to the peptidase M24A family. Methionine aminopeptidase type 1 subfamily. In terms of assembly, associates with the 60S ribosomal subunit of the 80S translational complex. It depends on Zn(2+) as a cofactor. Co(2+) is required as a cofactor. The cofactor is Mn(2+). Fe(2+) serves as cofactor.

The protein resides in the cytoplasm. The enzyme catalyses Release of N-terminal amino acids, preferentially methionine, from peptides and arylamides.. Cotranslationally removes the N-terminal methionine from nascent proteins. The N-terminal methionine is often cleaved when the second residue in the primary sequence is small and uncharged (Met-Ala-, Cys, Gly, Pro, Ser, Thr, or Val). In Dictyostelium discoideum (Social amoeba), this protein is Methionine aminopeptidase 1 (metap1).